The sequence spans 445 residues: GTPase Der (445 aa).

EngA-type G domains lie at 3–167 and 180–353; these read PVIA…YAGQ and VKIA…AAAM. Residues 9 to 16, 56 to 60, 119 to 122, 186 to 193, 233 to 237, and 298 to 301 contribute to the GTP site; these read GRPNVGKS, DTGGF, NKAE, DTAGL, and NKWD. The KH-like domain occupies 354-438; the sequence is AKLPTPKLTR…PLRIEFRSST (85 aa).

This sequence belongs to the TRAFAC class TrmE-Era-EngA-EngB-Septin-like GTPase superfamily. EngA (Der) GTPase family. As to quaternary structure, associates with the 50S ribosomal subunit.

In terms of biological role, GTPase that plays an essential role in the late steps of ribosome biogenesis. This is GTPase Der from Paraburkholderia phytofirmans (strain DSM 17436 / LMG 22146 / PsJN) (Burkholderia phytofirmans).